The primary structure comprises 258 residues: Venom plasminogen activator Haly-PA (258 aa).

The signal sequence occupies residues 1–18; the sequence is MALIRVLANLLILQLSYA. The propeptide occupies 19-24; the sequence is QKSSEL. One can recognise a Peptidase S1 domain in the interval 25-249; sequence VVGGDECNIN…HLDWIKSIIA (225 aa). 6 disulfides stabilise this stretch: cysteine 31–cysteine 163, cysteine 50–cysteine 66, cysteine 98–cysteine 256, cysteine 142–cysteine 210, cysteine 174–cysteine 189, and cysteine 200–cysteine 225. Asparagine 44 carries N-linked (GlcNAc...) asparagine glycosylation. Catalysis depends on charge relay system residues histidine 65 and aspartate 110. The Charge relay system role is filled by serine 204.

Belongs to the peptidase S1 family. Snake venom subfamily. In terms of assembly, monomer. Post-translationally, glycosylated. Expressed by the venom gland.

It is found in the secreted. Functionally, snake venom serine protease that activates plasminogen. Displays indirect fibrino(geno)lytic activity through conversion of plasminogen to plasmin. Shows a preferential cleavage at Arg-|-Xaa instead of Lys-|-Xaa bonds. The sequence is that of Venom plasminogen activator Haly-PA from Gloydius brevicauda (Korean slamosa snake).